The following is a 434-amino-acid chain: Pancreatic lipase-related protein 2 (434 aa).

Residues cysteine 4 and cysteine 10 are joined by a disulfide bond. Residues 76 to 88 (IHGFTDSGENSWL) form a required for galactolipase activity region. Cysteine 92 and cysteine 103 are joined by a disulfide. The active-site Nucleophile is the serine 154. Aspartate 178 serves as the catalytic Charge relay system. 4 residues coordinate Ca(2+): glutamate 189, arginine 192, aspartate 194, and aspartate 197. Cysteine 239 and cysteine 245 are oxidised to a cystine. The tract at residues 240–244 (KTGIS) is required for galactolipase activity. Histidine 247 acts as the Charge relay system in catalysis. 2 disulfides stabilise this stretch: cysteine 269/cysteine 280 and cysteine 283/cysteine 288. The N-linked (GlcNAc...) asparagine glycan is linked to asparagine 318. The 113-residue stretch at 322–434 (WRYKVTVTLS…ENVEQTLSPC (113 aa)) folds into the PLAT domain. The cysteines at positions 418 and 434 are disulfide-linked.

Belongs to the AB hydrolase superfamily. Lipase family. As to expression, pancreas.

It localises to the secreted. It is found in the zymogen granule membrane. The protein resides in the cell projection. The protein localises to the neuron projection. It catalyses the reaction a triacylglycerol + H2O = a diacylglycerol + a fatty acid + H(+). The catalysed reaction is a 1,2-diacyl-3-O-(beta-D-galactosyl)-sn-glycerol + 2 H2O = 3-beta-D-galactosyl-sn-glycerol + 2 a fatty acid + 2 H(+). The enzyme catalyses 1,2,3-tri-(9Z-octadecenoyl)-glycerol + H2O = di-(9Z)-octadecenoylglycerol + (9Z)-octadecenoate + H(+). It carries out the reaction di-(9Z)-octadecenoylglycerol + H2O = (9Z-octadecenoyl)-glycerol + (9Z)-octadecenoate + H(+). It catalyses the reaction (9Z-octadecenoyl)-glycerol + H2O = glycerol + (9Z)-octadecenoate + H(+). The catalysed reaction is 1-(9Z-octadecenoyl)-glycerol + H2O = glycerol + (9Z)-octadecenoate + H(+). The enzyme catalyses 1,2,3-tripropanoylglycerol + H2O = dipropanoylglycerol + propanoate + H(+). It carries out the reaction 1,2,3-tributanoylglycerol + H2O = dibutanoylglycerol + butanoate + H(+). It catalyses the reaction 1,2,3-trioctanoylglycerol + H2O = dioctanoylglycerol + octanoate + H(+). The catalysed reaction is 1,2-didecanoylglycerol + H2O = decanoylglycerol + decanoate + H(+). The enzyme catalyses long chain 1,2-diacyl-3-O-beta-D-galactosyl-sn-glycerol + H2O = long chain acyl-3-O-beta-D-galactosyl-sn-glycerol + a fatty acid + H(+). It carries out the reaction 1,2-dioctanoyl-3-O-beta-D-galactosyl-sn-glycerol + H2O = octanoyl-3-(beta-D-galactosyl)-sn-glycerol + octanoate + H(+). It catalyses the reaction 1,2-didodecanoyl-3-beta-D-galactosyl-sn-glycerol + H2O = dodecanoyl-3-beta-D-galactosyl-sn-glycerol + dodecanoate + H(+). The catalysed reaction is 1-beta-D-galactosyl-2,3-didodecanoyl-sn-glycerol + H2O = 1-beta-D-galactosyl-dodecanoyl-sn-glycerol + dodecanoate + H(+). The enzyme catalyses a 1,2-diacyl-3-O-[alpha-D-galactosyl-(1-&gt;6)-beta-D-galactosyl]-sn-glycerol + H2O = acyl-3-O-[alpha-D-galactosyl-(1-&gt;6)-beta-D-galactosyl]-sn-glycerol + a fatty acid + H(+). It carries out the reaction long chain 1,2-diacyl-3-O-[alpha-D-galactosyl-(1-&gt;6)-beta-D-galactosyl]-sn-glycerol + H2O = long chain acyl-3-O-[alpha-D-galactosyl-(1-&gt;6)-beta-D-galactosyl]-sn-glycerol + a fatty acid + H(+). It catalyses the reaction 1,2-dioctanoyl-3-O-[alpha-D-galactosyl-(1-&gt;6)-beta-D-galactosyl]-sn-glycerol + H2O = octanoyl-3-O-[alpha-D-galactosyl-(1-&gt;6)-beta-D-galactosyl]-sn-glycerol + octanoate + H(+). The catalysed reaction is 1,2-didodecanoyl-3-O-[alpha-D-galactosyl-(1-&gt;6)-beta-D-galactosyl]-sn-glycerol + H2O = dodecanoyl-3-O-[alpha-D-galactosyl-(1-&gt;6)-beta-D-galactosyl]-sn-glycerol + dodecanoate + H(+). The enzyme catalyses a 1,2-diacyl-sn-glycero-3-phosphocholine + H2O = a monoacyl-sn-glycero-3-phosphocholine + a fatty acid + H(+). It participates in glycerolipid metabolism; triacylglycerol degradation. It functions in the pathway glycolipid metabolism. Its activity is regulated as follows. CLPS stimulates triacylglycerol lipase activity. Not inhibited by bile salts. Functionally, lipase that primarily hydrolyzes triglycerides and galactosylglycerides. In neonates, may play a major role in pancreatic digestion of dietary fats such as milk fat globules enriched in long-chain triglycerides. Hydrolyzes short-, medium- and long-chain fatty acyls in triglycerides without apparent positional specificity. Can completely deacylate triacylglycerols. When the liver matures and bile salt synthesis increases, likely functions mainly as a galactolipase and monoacylglycerol lipase. Hydrolyzes monogalactosyldiglycerols (MGDG) and digalactosyldiacylglycerols (DGDG) present in a plant-based diet, releasing long-chain polyunsaturated fatty acids. Hydrolyzes medium- and long-chain fatty acyls in galactolipids. May act together with LIPF to hydrolyze partially digested triglycerides. Hydrolyzes long-chain monoglycerides with high efficiency. In cytotoxic T cells, contributes to perforin-dependent cell lysis, but is unlikely to mediate direct cytotoxicity. Also has low phospholipase activity. In neurons, required for the localization of the phospholipid 1-oleoyl-2-palmitoyl-PC (OPPC) to neurite tips through acyl chain remodeling of membrane phospholipids. The resulting OPPC-rich lipid membrane domain recruits the t-SNARE protein STX4 by selectively interacting with the STX4 transmembrane domain and this promotes surface expression of the dopamine transporter SLC6A3/DAT at neurite tips by facilitating fusion of SLC6A3-containing transport vesicles with the plasma membrane. The polypeptide is Pancreatic lipase-related protein 2 (Cavia porcellus (Guinea pig)).